The chain runs to 363 residues: tRNA/tmRNA (uracil-C(5))-methyltransferase (363 aa).

S-adenosyl-L-methionine contacts are provided by glutamine 187, tyrosine 215, asparagine 220, glutamate 236, and aspartate 296. The active-site Nucleophile is cysteine 321. Glutamate 355 acts as the Proton acceptor in catalysis.

It belongs to the class I-like SAM-binding methyltransferase superfamily. RNA M5U methyltransferase family. TrmA subfamily.

It catalyses the reaction uridine(54) in tRNA + S-adenosyl-L-methionine = 5-methyluridine(54) in tRNA + S-adenosyl-L-homocysteine + H(+). The catalysed reaction is uridine(341) in tmRNA + S-adenosyl-L-methionine = 5-methyluridine(341) in tmRNA + S-adenosyl-L-homocysteine + H(+). In terms of biological role, dual-specificity methyltransferase that catalyzes the formation of 5-methyluridine at position 54 (m5U54) in all tRNAs, and that of position 341 (m5U341) in tmRNA (transfer-mRNA). In Pseudomonas aeruginosa (strain LESB58), this protein is tRNA/tmRNA (uracil-C(5))-methyltransferase.